A 402-amino-acid chain; its full sequence is Oxysterol-binding protein 8 (402 aa).

Positions 328 to 361 (DRIALEEGNLDVAAKEKHNLEEKQREDKRQRVAE) form a coiled coil.

This sequence belongs to the OSBP family.

The chain is Oxysterol-binding protein 8 (osbH) from Dictyostelium discoideum (Social amoeba).